We begin with the raw amino-acid sequence, 1969 residues long: Myosin-3 (1969 aa).

The 50-residue stretch at 33-82 (DSKKNCWIPDPEDGFVAAEIQSTTGDQVTVVTVKGNQITVKKDQCQEMNP) folds into the Myosin N-terminal SH3-like domain. One can recognise a Myosin motor domain in the interval 86-791 (DKTEDMANLT…VLAKLEDLRD (706 aa)). K130 is modified (N6,N6,N6-trimethyllysine). 179–186 (GESGAGKT) contacts ATP. Actin-binding stretches follow at residues 667 to 689 (LNNLMNMLYQTHPHFIRCIIPNE) and 770 to 784 (KIGETKIFFKAGVLA). One can recognise an IQ domain in the interval 794 to 823 (LSRIVTMFQSRIRSYLAKAEVRRRYEQQTG). Residues 853–1941 (LKAGKEQEAM…KMRNKIRASA (1089 aa)) adopt a coiled-coil conformation. 3 disordered regions span residues 943–967 (QERHEDLTRQKKKTEQELSDTKKHV), 993–1029 (DEMANQDESVAKLNKEKKHQEESNRKLNEDLQSEEDK), and 1134–1153 (ELESERNSRQKADRTRNELQ). Basic and acidic residues-rich tracts occupy residues 1001 to 1029 (SVAKLNKEKKHQEESNRKLNEDLQSEEDK) and 1137 to 1153 (SERNSRQKADRTRNELQ).

Belongs to the TRAFAC class myosin-kinesin ATPase superfamily. Myosin family. As to quaternary structure, muscle myosin is a hexameric protein that consists of 2 heavy chain subunits (MHC), 2 alkali light chain subunits (MLC) and 2 regulatory light chain subunits (MLC-2).

The protein resides in the cytoplasm. The protein localises to the myofibril. It is found in the sarcomere. Its subcellular location is the a band. In terms of biological role, essential for muscle contraction. Involved in ovulation likely by regulating the contraction of gonadal myoepithelial sheath cells. This chain is Myosin-3, found in Caenorhabditis briggsae.